The following is a 240-amino-acid chain: Lysoplasmalogenase TMEM86A (240 aa).

The Cytoplasmic portion of the chain corresponds to 1-21 (MVSPVTVVKSEGPKLVPFFKA). Residues 22–42 (TCVYFVLWLPSSSPSWVSALI) traverse the membrane as a helical segment. A topological domain (extracellular) is located at residue Lys-43. Residues 44–64 (CLPIFCLWLFLLAHGLGFLLT) traverse the membrane as a helical segment. The Cytoplasmic segment spans residues 65–70 (HPSATR). A helical transmembrane segment spans residues 71–91 (IFVGLVFSAIGDAFLIWQDQG). Tyr-92 is a topological domain (extracellular). Residues 93-113 (FVHGMLMFAVTHMLYASAFGM) traverse the membrane as a helical segment. Over 114-115 (RP) the chain is Cytoplasmic. A helical membrane pass occupies residues 116–136 (LGLRTGLLMVILSGLCYAFLY). The Extracellular portion of the chain corresponds to 137–138 (PN). Residues 139–159 (LTGAFTYVVGVYVAIIGFMGW) form a helical membrane-spanning segment. Residues 160 to 174 (RAMAGLQLVGAAWRW) lie on the Cytoplasmic side of the membrane. Residues 175-195 (TELAAGTGALLFIVSDLTIAL) form a helical membrane-spanning segment. The Extracellular portion of the chain corresponds to 196–206 (DKFCFPVPYSR). Residues 207–227 (ALIMSTYYAAQMLIALSAVES) traverse the membrane as a helical segment. Over 228-240 (REPVEDYRLSKAK) the chain is Cytoplasmic.

This sequence belongs to the TMEM86 family.

It localises to the endoplasmic reticulum membrane. The catalysed reaction is a 1-O-(1Z-alkenyl)-sn-glycero-3-phosphocholine + H2O = a 2,3-saturated aldehyde + sn-glycerol 3-phosphocholine. It catalyses the reaction a 1-O-(1Z-alkenyl)-sn-glycero-3-phosphoethanolamine + H2O = a 2,3-saturated aldehyde + sn-glycero-3-phosphoethanolamine. In terms of biological role, catalyzes the hydrolysis of the vinyl ether bond of choline or ethanolamine lysoplasmalogens, forming fatty aldehyde and glycerophosphocholine or glycerophosphoethanolamine, respectively and is specific for the sn-2-deacylated (lyso) form of plasmalogen. Plays an important role in lysoplasmalogen metabolism in the adipocyte tissue and macrophages. The protein is Lysoplasmalogenase TMEM86A (TMEM86A) of Bos taurus (Bovine).